An 897-amino-acid chain; its full sequence is Serine/threonine-protein kinase ATG1 (897 aa).

Residues 24-325 form the Protein kinase domain; that stretch reads YTAEKEIGKG…FEEFFANKVV (302 aa). ATP-binding positions include 30–38 and Lys-54; that span reads IGKGSFATV. Ser-34 bears the Phosphoserine mark. The residue at position 129 (Thr-129) is a Phosphothreonine. Asp-172 serves as the catalytic Proton acceptor. Position 226 is a phosphothreonine; by autocatalysis (Thr-226). Ser-304, Ser-365, and Ser-390 each carry phosphoserine. The LIR signature appears at 429 to 432; that stretch reads YVVV. Positions 490 to 509 are disordered; it reads LLRATSSSSGGSDGSRRPSL. A phosphoserine; by PKA mark is found at Ser-508 and Ser-515. 3 positions are modified to phosphoserine: Ser-533, Ser-551, and Ser-552. Phosphothreonine is present on Thr-590. A phosphoserine mark is found at Ser-621, Ser-635, Ser-638, Ser-647, Ser-677, Ser-680, Ser-683, Ser-769, and Ser-783. Residues 880–886 form a required for Cvt trafficking region; it reads DSIANRL.

It belongs to the protein kinase superfamily. Ser/Thr protein kinase family. APG1/unc-51/ULK1 subfamily. In terms of assembly, homodimer. Dimerization requires the presence of ATG13. Forms a ternary complex with ATG13 and ATG17. Also interacts with ATG11. In terms of processing, autophosphorylated at Thr-226 and Ser-390. The phosphorylation state may play a role in the induction of protein degradation upon starvation. Phosphorylation at Thr-226 within the activation loop is required for protein kinase activity whereas phosphorylation at Ser-34 leads to inhibition of kinase activity. Phosphorylation of Ser-508 and Ser-515 by PKA is required to induce autophagy but not for kinase activity.

Its subcellular location is the cytoplasm. The protein resides in the preautophagosomal structure membrane. It catalyses the reaction L-seryl-[protein] + ATP = O-phospho-L-seryl-[protein] + ADP + H(+). The enzyme catalyses L-threonyl-[protein] + ATP = O-phospho-L-threonyl-[protein] + ADP + H(+). Activated by hypophosphorylated form of ATG13 (present in nitrogen starvation conditions). Also activated by autophopsphorylation of Thr-226 and inhibited by phosphorylation of Ser-34. In terms of biological role, serine/threonine protein kinase involved in the cytoplasm to vacuole transport (Cvt) and found to be essential in autophagy, where it is required for the formation of autophagosomes. Involved in the clearance of protein aggregates which cannot be efficiently cleared by the proteasome. Required for selective autophagic degradation of the nucleus (nucleophagy) as well as for mitophagy which contributes to regulate mitochondrial quantity and quality by eliminating the mitochondria to a basal level to fulfill cellular energy requirements and preventing excess ROS production. Also involved in endoplasmic reticulum-specific autophagic process, in selective removal of ER-associated degradation (ERAD) substrates. Plays a key role in ATG9 and ATG23 cycling through the pre-autophagosomal structure and is necessary to promote ATG18 binding to ATG9 through phosphorylation of ATG9. Catalyzes phosphorylation of ATG4, decreasing the interaction between ATG4 and ATG8 and impairing deconjugation of PE-conjugated forms of ATG8. Finally, ATG1 is also required for the maintenance of cell viability under starvation and for glycogen storage during stationary phase. Plays a role in genome stability through suppression of abnormal mitosis under starvation, and in regulation of filamentous growth. The protein is Serine/threonine-protein kinase ATG1 of Saccharomyces cerevisiae (strain YJM789) (Baker's yeast).